The following is a 35-amino-acid chain: Purotoxin-1 (35 aa).

Cystine bridges form between cysteine 3/cysteine 16, cysteine 10/cysteine 21, cysteine 15/cysteine 32, and cysteine 23/cysteine 30.

It belongs to the neurotoxin 33 family. In terms of tissue distribution, expressed by the venom gland.

Its subcellular location is the secreted. Functionally, inhibits P2RX3 receptors. Has an analgesic effect in rat. Enhances the high-affinity desensitization of P2RX3 purinoceptors. At 50 nM, decreases the IC(50) for ambient ATP from 46.5 nM to 12.7 nM in mouse P2RX3. The sequence is that of Purotoxin-1 from Alopecosa marikovskyi (Wolf spider).